The primary structure comprises 237 residues: uncharacterized protein (237 aa).

One can recognise a DPCK domain in the interval 13 to 218; it reads VVGLSGGVAT…KSWKPYIFRV (206 aa). 18–25 serves as a coordination point for ATP; that stretch reads GGVATGKS.

Belongs to the CoaE family.

This is an uncharacterized protein from Caenorhabditis elegans.